Consider the following 297-residue polypeptide: Aspartate dehydrogenase domain-containing protein (297 aa).

A phosphoserine mark is found at Ser-24 and Ser-172.

This sequence belongs to the L-aspartate dehydrogenase family.

This chain is Aspartate dehydrogenase domain-containing protein, found in Rattus norvegicus (Rat).